The primary structure comprises 129 residues: UPF0212 protein MA_1372 (129 aa).

The protein belongs to the UPF0212 family.

This is UPF0212 protein MA_1372 from Methanosarcina acetivorans (strain ATCC 35395 / DSM 2834 / JCM 12185 / C2A).